Here is a 234-residue protein sequence, read N- to C-terminus: MKFSFVSLFPNLMEFYFQDSILARAKEKKLFKLNFYNPRDFSKNSYHKVDDYKIGGGAGLLMQAEPMYEVLRSIQEKKENPYFIFLNPSGKTFNQKDAKRLSKKEHIVFVCGRYEGIDERVLEIFANEVFSIGDFILTGGELPALVMCDAILRNVNGVLGNMESLEEESFENNLLEAPAFSKPFIFEKKNKKFYTPSEFLKGNHARIASLKTTLASCKTKFFRPDLFLEHERKK.

S-adenosyl-L-methionine-binding positions include G112 and 132-137; that span reads IGDFIL.

Belongs to the RNA methyltransferase TrmD family. As to quaternary structure, homodimer.

Its subcellular location is the cytoplasm. It carries out the reaction guanosine(37) in tRNA + S-adenosyl-L-methionine = N(1)-methylguanosine(37) in tRNA + S-adenosyl-L-homocysteine + H(+). Its function is as follows. Specifically methylates guanosine-37 in various tRNAs. This is tRNA (guanine-N(1)-)-methyltransferase from Campylobacter jejuni subsp. jejuni serotype O:6 (strain 81116 / NCTC 11828).